Reading from the N-terminus, the 216-residue chain is MRIFLDTANIEEIKKGLKLGVVSGVTTNPTLVAKEGISDYKSVVQQICALLPEGDVSAEITAEDPAEMLKQAREIAKWAPNVVVKIPATAEGLEIISKLSKEGVRFNMTLCFSVNQALLGALAGAAFVSPFVGRLDDAGHDGMMLINDIVSIYKEYGFETQVIAASIRHPLHCTQAAQTGAGIATVPYKVLMQMMQHPLTDSGIARFMADWKSVQK.

Lys85 functions as the Schiff-base intermediate with substrate in the catalytic mechanism.

This sequence belongs to the transaldolase family. Type 3B subfamily.

It localises to the cytoplasm. The enzyme catalyses D-sedoheptulose 7-phosphate + D-glyceraldehyde 3-phosphate = D-erythrose 4-phosphate + beta-D-fructose 6-phosphate. It functions in the pathway carbohydrate degradation; pentose phosphate pathway; D-glyceraldehyde 3-phosphate and beta-D-fructose 6-phosphate from D-ribose 5-phosphate and D-xylulose 5-phosphate (non-oxidative stage): step 2/3. Functionally, transaldolase is important for the balance of metabolites in the pentose-phosphate pathway. This Dehalococcoides mccartyi (strain ATCC BAA-2266 / KCTC 15142 / 195) (Dehalococcoides ethenogenes (strain 195)) protein is Probable transaldolase.